Reading from the N-terminus, the 179-residue chain is Phospholipase A2 (179 aa).

A signal peptide spans 1–21; sequence MHALRSSVLALWLCLHVSVRA. The propeptide occupies 22–39; the sequence is WMTYRSANGLDEYEPEDR. Residues tryptophan 47, glycine 49, and glycine 51 each contribute to the Ca(2+) site. Disulfide bonds link cysteine 48/cysteine 70, cysteine 69/cysteine 109, cysteine 76/cysteine 102, cysteine 100/cysteine 133, and cysteine 142/cysteine 150. Histidine 73 is an active-site residue. A Ca(2+)-binding site is contributed by aspartate 74. Aspartate 103 is a catalytic residue. The N-linked (GlcNAc...) asparagine glycan is linked to asparagine 112.

Ca(2+) is required as a cofactor. As to expression, expressed by the venom gland.

The protein localises to the secreted. The catalysed reaction is a 1,2-diacyl-sn-glycero-3-phosphocholine + H2O = a 1-acyl-sn-glycero-3-phosphocholine + a fatty acid + H(+). Its function is as follows. PLA2 catalyzes the calcium-dependent hydrolysis of the 2-acyl groups in 3-sn-phosphoglycerides. The polypeptide is Phospholipase A2 (Xylocopa appendiculata circumvolans (Japanese carpenter bee)).